Consider the following 692-residue polypeptide: Ribonuclease J (692 aa).

Residues 1–91 (MTDNNQNNEN…RNYAKEELDN (91 aa)) are disordered. The segment covering 9–25 (ENHENSSENSKDHHEAR) has biased composition (basic and acidic residues). Residues 57 to 79 (HHKKEHRPNKKPNNHHKPKHASQ) show a composition bias toward basic residues. An N6-acetyllysine mark is found at lysine 135 and lysine 141. Residues histidine 209, histidine 211, aspartate 213, histidine 214, histidine 278, and aspartate 300 each coordinate Zn(2+). N6-acetyllysine is present on residues lysine 324, lysine 338, and lysine 398. 501 to 505 (HVSGH) is a binding site for substrate. Residue lysine 512 is modified to N6-acetyllysine. Histidine 527 contacts Zn(2+). Residues lysine 548, lysine 635, and lysine 650 each carry the N6-acetyllysine modification.

Belongs to the metallo-beta-lactamase superfamily. RNA-metabolizing metallo-beta-lactamase-like family. Bacterial RNase J subfamily. As to quaternary structure, homodimer. Homotetramer; dimer of homodimers. Interacts with RNA helicase RhpA, might be a member of a minimal RNA degradosome complex. Requires Zn(2+) as cofactor. Acetylated on nine lysine residues. Some of the residues are acetylated by multiple different mechanisms. RimL is partially responsible for the acetylation of Lys-324, Lys-398 and Lys-650. HPB8_1270 homolog is partially responsible for the acetylation of Lys-324, Lys-398, Lys-512 and Lys-650. Acetyl-phosphate-mediated non-enzymatic acetylation pathway takes part in the acetylation of Lys-135, Lys-324, Lys-398, Lys-512 and Lys-650. Acetylation of the remaining residues Lys-141, Lys-338, Lys-548 and Lys-635 occurs by a yet undetermined mechanism. Acetylation on a number of these residues is important for growth regulation and proper cell morphology.

The protein resides in the cytoplasm. With respect to regulation, catalytic activity is regulated by the balance between homodimers and homotetramers, with homotetramers being the active forms of this enzyme. Acetylation allosterically regulates the homooligomerization state and hence the catalytic activity. An RNase that has 5'-3' exoribonuclease and endoribonuclease activity. Degrades 5'-monophosphorylated ssRNA and dsRNA, considerably more active on ssRNA. Association with RhpA significantly increases the dsRNase activity. Degrades RNA substrate with hairpin structures at both ends with low activity, but presence of RhpA significantly increases the activity on this substrate. Stimulates ATPase activity of RNA helicase RhpA. Involved in stabilization of mRNA but apparently not rRNA. This chain is Ribonuclease J, found in Helicobacter pylori (strain J99 / ATCC 700824) (Campylobacter pylori J99).